Reading from the N-terminus, the 413-residue chain is Serine hydroxymethyltransferase (413 aa).

Residues L119 and 123 to 125 (GHL) each bind (6S)-5,6,7,8-tetrahydrofolate. An N6-(pyridoxal phosphate)lysine modification is found at K228.

It belongs to the SHMT family. In terms of assembly, homodimer. It depends on pyridoxal 5'-phosphate as a cofactor.

It is found in the cytoplasm. It catalyses the reaction (6R)-5,10-methylene-5,6,7,8-tetrahydrofolate + glycine + H2O = (6S)-5,6,7,8-tetrahydrofolate + L-serine. The protein operates within one-carbon metabolism; tetrahydrofolate interconversion. It functions in the pathway amino-acid biosynthesis; glycine biosynthesis; glycine from L-serine: step 1/1. In terms of biological role, catalyzes the reversible interconversion of serine and glycine with tetrahydrofolate (THF) serving as the one-carbon carrier. This reaction serves as the major source of one-carbon groups required for the biosynthesis of purines, thymidylate, methionine, and other important biomolecules. Also exhibits THF-independent aldolase activity toward beta-hydroxyamino acids, producing glycine and aldehydes, via a retro-aldol mechanism. In Desulfatibacillum aliphaticivorans, this protein is Serine hydroxymethyltransferase.